Here is a 92-residue protein sequence, read N- to C-terminus: C-C motif chemokine 4-like (92 aa).

Positions 1 to 23 (MKLCVTVLSLLVLVAAFCSLALS) are cleaved as a signal peptide. Intrachain disulfides connect Cys-34–Cys-58 and Cys-35–Cys-74.

The protein belongs to the intercrine beta (chemokine CC) family. In terms of assembly, interacts with CCR5. Detected in B-cells.

The protein resides in the secreted. Chemokine that induces chemotaxis of cells expressing CCR5 or CCR1. Inhibits HIV replication in peripheral blood monocytes that express CCR5. The protein is C-C motif chemokine 4-like (CCL4L1) of Homo sapiens (Human).